Consider the following 103-residue polypeptide: Phosphoribosyl-ATP pyrophosphatase (103 aa).

It belongs to the PRA-PH family.

The protein localises to the cytoplasm. The enzyme catalyses 1-(5-phospho-beta-D-ribosyl)-ATP + H2O = 1-(5-phospho-beta-D-ribosyl)-5'-AMP + diphosphate + H(+). Its pathway is amino-acid biosynthesis; L-histidine biosynthesis; L-histidine from 5-phospho-alpha-D-ribose 1-diphosphate: step 2/9. The protein is Phosphoribosyl-ATP pyrophosphatase of Cereibacter sphaeroides (strain ATCC 17025 / ATH 2.4.3) (Rhodobacter sphaeroides).